A 298-amino-acid polypeptide reads, in one-letter code: Protein BZR1 homolog 1 (298 aa).

Disordered regions lie at residues 1 to 25 (MTSG…RRER), 71 to 129 (GTTY…SPSR), 153 to 175 (VSSS…PKIR), and 190 to 217 (AVSA…ESDV). The interval 10 to 91 (RTPTWKEREN…PSSAGGASVG (82 aa)) is required for DNA-binding. The segment covering 96–128 (SSTQLLSAPSSSFPSPVPSYHASPASSSFPSPS) has biased composition (low complexity). At serine 156 the chain carries Phosphoserine. Residues 204 to 224 (EHPDTIPECDESDVSTVDSGR) are PEST-like.

This sequence belongs to the BZR/LAT61 family. Interacts with GF14C. Interacts with PUB24. Interacts with SMOS1. In terms of processing, phosphorylated on serine and threonine residues by GSK2. Dephosphorylated during response to brassinosteroid. Post-translationally, ubiquitinated by PUB24. Ubiquitination leads to its subsequent degradation by the 26S proteasome, thus reducing sensitivity to brassinosteroid signaling.

It localises to the nucleus. The protein resides in the cytoplasm. Its function is as follows. Positive brassinosteroid-signaling protein. Mediates downstream brassinosteroid-regulated growth response and feedback inhibition of brassinosteroid (BR) biosynthetic genes. May act as transcriptional repressor by binding the brassinosteroid-response element (BREE) (5'-CGTG(T/C)G-3') in the promoter of DLT (AC Q9LWU9), another positive regulator of BR signaling. Acts as a transcriptional repressor of LIC, a negative regulator of BR signaling, by binding to the BRRE element of its promoter. BZR1 and LIC play opposite roles in BR signaling and regulation of leaf bending. The protein is Protein BZR1 homolog 1 of Oryza sativa subsp. japonica (Rice).